Reading from the N-terminus, the 692-residue chain is A-type ATP synthase subunit I (692 aa).

The next 7 membrane-spanning stretches (helical) occupy residues 389 to 409 (GIML…LFIW), 422 to 442 (LGYI…ITGG), 494 to 514 (ILVF…FVGF), 531 to 551 (GVWI…FAGA), 553 to 573 (TMIA…ASMY), 602 to 622 (ARLL…NIMA), and 624 to 644 (LVGE…LLVG).

It belongs to the V-ATPase 116 kDa subunit family. As to quaternary structure, the A-type ATPase is composed of subunits A(3), B(3), C, D, E(1 or 2), F, H(2), I and K(x).

It is found in the cell membrane. Functionally, component of the A-type ATP synthase that produces ATP from ADP in the presence of a proton gradient across the membrane. This chain is A-type ATP synthase subunit I, found in Methanocaldococcus jannaschii (strain ATCC 43067 / DSM 2661 / JAL-1 / JCM 10045 / NBRC 100440) (Methanococcus jannaschii).